The following is a 131-amino-acid chain: Small ribosomal subunit protein uS8 (131 aa).

The protein belongs to the universal ribosomal protein uS8 family. Part of the 30S ribosomal subunit. Contacts proteins S5 and S12.

In terms of biological role, one of the primary rRNA binding proteins, it binds directly to 16S rRNA central domain where it helps coordinate assembly of the platform of the 30S subunit. The protein is Small ribosomal subunit protein uS8 of Geobacillus stearothermophilus (Bacillus stearothermophilus).